We begin with the raw amino-acid sequence, 589 residues long: DNA ligase (589 aa).

Glutamate 250 serves as a coordination point for ATP. The active-site N6-AMP-lysine intermediate is the lysine 252. ATP-binding residues include arginine 257, arginine 272, glutamate 302, phenylalanine 342, arginine 417, and lysine 423.

This sequence belongs to the ATP-dependent DNA ligase family. Requires Mg(2+) as cofactor.

The enzyme catalyses ATP + (deoxyribonucleotide)n-3'-hydroxyl + 5'-phospho-(deoxyribonucleotide)m = (deoxyribonucleotide)n+m + AMP + diphosphate.. Functionally, DNA ligase that seals nicks in double-stranded DNA during DNA replication, DNA recombination and DNA repair. In Cenarchaeum symbiosum (strain A), this protein is DNA ligase.